The primary structure comprises 234 residues: Large ribosomal subunit protein bL25 (234 aa).

This sequence belongs to the bacterial ribosomal protein bL25 family. CTC subfamily. As to quaternary structure, part of the 50S ribosomal subunit; part of the 5S rRNA/L5/L18/L25 subcomplex. Contacts the 5S rRNA. Binds to the 5S rRNA independently of L5 and L18.

Functionally, this is one of the proteins that binds to the 5S RNA in the ribosome where it forms part of the central protuberance. The sequence is that of Large ribosomal subunit protein bL25 from Rhodopseudomonas palustris (strain BisA53).